The sequence spans 413 residues: MSMAATETLNRTDIAKAPQVRLAAQPEKPSLIGLLREDMAKLLVEKGVPERQVKMRVSQVWHWLYVRGVSDFNEMSNVSKDMREMLSAHFTIARPEIVEEQVSGDGTRKWLLRFPPRGAGRPVEIETVYIPEEGRGTLCISSQVGCTLTCSFCHTGTQKLVRNLTAEEILAQLLLARDRLGDFPDRDTPQGAIVPAEGRKITNVVMMGMGEPLYNFENVKTALLIASDGDGLSLSKRRITLSTSGIVPEIYRTGEEIGVMLAISLHAVRDDLRDMLVPINKKYPLKELMEACRAYPGLSNARRITFEYVMLKDVNDSLEDAKELVKLLKGIPAKINLIPFNPWPGTNYQCSDWEQIEKFADFINQAGYASPIRTPRGRDILAACGQLKSDSERMRKVDRLAFEAMMIANHGED.

Glutamate 126 acts as the Proton acceptor in catalysis. The Radical SAM core domain maps to 132-381 (EEGRGTLCIS…IRTPRGRDIL (250 aa)). Cysteines 139 and 384 form a disulfide. [4Fe-4S] cluster is bound by residues cysteine 146, cysteine 150, and cysteine 153. Residues 210–211 (GE), serine 242, 264–266 (SLH), and asparagine 341 each bind S-adenosyl-L-methionine. The active-site S-methylcysteine intermediate is cysteine 384.

Belongs to the radical SAM superfamily. RlmN family. It depends on [4Fe-4S] cluster as a cofactor.

The protein localises to the cytoplasm. The catalysed reaction is adenosine(2503) in 23S rRNA + 2 reduced [2Fe-2S]-[ferredoxin] + 2 S-adenosyl-L-methionine = 2-methyladenosine(2503) in 23S rRNA + 5'-deoxyadenosine + L-methionine + 2 oxidized [2Fe-2S]-[ferredoxin] + S-adenosyl-L-homocysteine. The enzyme catalyses adenosine(37) in tRNA + 2 reduced [2Fe-2S]-[ferredoxin] + 2 S-adenosyl-L-methionine = 2-methyladenosine(37) in tRNA + 5'-deoxyadenosine + L-methionine + 2 oxidized [2Fe-2S]-[ferredoxin] + S-adenosyl-L-homocysteine. Its function is as follows. Specifically methylates position 2 of adenine 2503 in 23S rRNA and position 2 of adenine 37 in tRNAs. m2A2503 modification seems to play a crucial role in the proofreading step occurring at the peptidyl transferase center and thus would serve to optimize ribosomal fidelity. This is Dual-specificity RNA methyltransferase RlmN from Sinorhizobium medicae (strain WSM419) (Ensifer medicae).